The following is a 189-amino-acid chain: Copper transport protein CTR2 (189 aa).

The Cytoplasmic portion of the chain corresponds to 1-81 (MDDKKTWSTV…VVFEWWHIKT (81 aa)). A helical transmembrane segment spans residues 82–102 (LPGLILSCLAIFGLAYLYEYL). The Vacuolar portion of the chain corresponds to 103–142 (KYCVHKRQLSQRVLLPNRSLTKINQADKVSNSILYGLQVG). The helical transmembrane segment at 143-163 (FSFMLMLVFMTYNGWLMLAVV) threads the bilayer. Residues 164–189 (CGAIWGNYSWCTSYSPEIDDSSLACH) are Cytoplasmic-facing.

This sequence belongs to the copper transporter (Ctr) (TC 1.A.56) family. SLC31A subfamily. Homomultimer.

It is found in the vacuole membrane. In terms of biological role, provides bioavailable copper via mobilization of vacuolar copper stores and export to the cytoplasm. This chain is Copper transport protein CTR2 (CTR2), found in Saccharomyces cerevisiae (strain ATCC 204508 / S288c) (Baker's yeast).